The following is a 394-amino-acid chain: Probable malate--CoA ligase subunit beta (394 aa).

The ATP-grasp domain maps to 9-244 (KELLARHGVH…KSQEDPRETF (236 aa)). 4 residues coordinate ATP: Lys46, Glu99, Val102, and Glu107. Mg(2+) is bound by residues Asn199 and Asp213.

This sequence belongs to the succinate/malate CoA ligase beta subunit family. As to quaternary structure, heterotetramer of two alpha and two beta subunits. Mg(2+) is required as a cofactor.

It catalyses the reaction (S)-malate + ATP + CoA = (S)-malyl-CoA + ADP + phosphate. It functions in the pathway one-carbon metabolism; formaldehyde assimilation via serine pathway. This chain is Probable malate--CoA ligase subunit beta (mtkA), found in Mesorhizobium japonicum (strain LMG 29417 / CECT 9101 / MAFF 303099) (Mesorhizobium loti (strain MAFF 303099)).